The sequence spans 554 residues: Inactive sesquithujene synthase (554 aa).

Mg(2+) is bound by residues Asp308 and Asp312. Substrate contacts are provided by Asp308, Asp312, Arg449, and Asn452. A DDXXD motif motif is present at residues 308 to 312 (DDMFD). Asn452, Ser456, and Glu460 together coordinate Mg(2+).

This sequence belongs to the terpene synthase family. In terms of assembly, monomer. It depends on Mg(2+) as a cofactor. Mn(2+) is required as a cofactor.

The protein resides in the cytoplasm. It participates in secondary metabolite biosynthesis; terpenoid biosynthesis. Functionally, non-functional sesquiterpene synthase having less than 1% of the activity found in cv. Delprim. In Zea mays (Maize), this protein is Inactive sesquithujene synthase.